A 335-amino-acid polypeptide reads, in one-letter code: Lipase chaperone (335 aa).

Residues leucine 7 to proline 23 traverse the membrane as a helical segment.

It belongs to the lipase chaperone family.

It localises to the cell inner membrane. In terms of biological role, may be involved in the folding of the extracellular lipase during its passage through the periplasm. This is Lipase chaperone (lifO) from Ectopseudomonas mendocina (Pseudomonas mendocina).